Reading from the N-terminus, the 397-residue chain is Protein Mx1 (397 aa).

This sequence belongs to the TRAFAC class dynamin-like GTPase superfamily. Dynamin/Fzo/YdjA family.

This is Protein Mx1 (Mx1) from Mus musculus (Mouse).